The following is a 940-amino-acid chain: Beta-mannosidase A (940 aa).

A signal peptide spans 1-21 (MHFHGIATQAVLASNITTGSG). Residues asparagine 15, asparagine 39, asparagine 79, asparagine 245, asparagine 314, asparagine 321, and asparagine 344 are each glycosylated (N-linked (GlcNAc...) asparagine). Residue glutamate 476 is the Proton donor of the active site. Asparagine 534, asparagine 605, asparagine 626, asparagine 653, asparagine 733, asparagine 761, and asparagine 785 each carry an N-linked (GlcNAc...) asparagine glycan.

Belongs to the glycosyl hydrolase 2 family. Beta-mannosidase A subfamily. As to quaternary structure, homodimer.

The protein localises to the secreted. It catalyses the reaction Hydrolysis of terminal, non-reducing beta-D-mannose residues in beta-D-mannosides.. It participates in glycan metabolism; N-glycan degradation. Functionally, exoglycosidase that cleaves the single beta-linked mannose residue from the non-reducing end of beta-mannosidic oligosaccharides of various complexity and length. Involved in the degradation of polymeric mannan and galactomannan. This is Beta-mannosidase A (mndA) from Emericella nidulans (strain FGSC A4 / ATCC 38163 / CBS 112.46 / NRRL 194 / M139) (Aspergillus nidulans).